The primary structure comprises 476 residues: tRNA(Ile)-lysidine synthase (476 aa).

Residue 30 to 35 (SGGPDS) coordinates ATP.

It belongs to the tRNA(Ile)-lysidine synthase family.

It localises to the cytoplasm. It catalyses the reaction cytidine(34) in tRNA(Ile2) + L-lysine + ATP = lysidine(34) in tRNA(Ile2) + AMP + diphosphate + H(+). Its function is as follows. Ligates lysine onto the cytidine present at position 34 of the AUA codon-specific tRNA(Ile) that contains the anticodon CAU, in an ATP-dependent manner. Cytidine is converted to lysidine, thus changing the amino acid specificity of the tRNA from methionine to isoleucine. In Bacillus thuringiensis subsp. konkukian (strain 97-27), this protein is tRNA(Ile)-lysidine synthase.